A 353-amino-acid chain; its full sequence is Ubiquinol oxidase 2, mitochondrial (353 aa).

A mitochondrion-targeting transit peptide spans 1-21 (MSQLITKAALRVLLVCGRGNC). The chain crosses the membrane as a helical span at residues 178–198 (AMMLETVAAVPGMVGGMLLHL). Residues glutamate 182, glutamate 221, and histidine 224 each coordinate Fe cation. The chain crosses the membrane as a helical span at residues 240-260 (LLVMLVQGIFFNSFFVCYVIS). Fe cation-binding residues include glutamate 272, glutamate 323, and histidine 326.

The protein belongs to the alternative oxidase family. Homodimer; disulfide-linked. Fe cation is required as a cofactor. As to expression, maximally expressed in dry seeds. Detected in roots, stems and leaves.

It localises to the mitochondrion inner membrane. It carries out the reaction 2 a ubiquinol + O2 = 2 a ubiquinone + 2 H2O. Its function is as follows. Catalyzes the cyanide-resistant oxidation of ubiquinol and the reduction of molecular oxygen to water, but does not translocate protons and consequently is not linked to oxidative phosphorylation. May increase respiration when the cytochrome respiratory pathway is restricted, or in response to low temperatures. This Arabidopsis thaliana (Mouse-ear cress) protein is Ubiquinol oxidase 2, mitochondrial (AOX2).